The following is a 199-amino-acid chain: MTTFTKPLSKLIGHFEKFPGIGPRTAQRLALFILKQSESSIRDFSKALLEAHSNVGHCKKCFNLTSEEECDICRNAERNQNIICVVAETKDLLALERAREFKGVYHVIGGLISPMDSIGPEILEIRSLVERVSKSEIDEIILALTPSVEGDTTSLYIGKLLTPFTKVTRIAYGLPMGSELEYVDEVTLARALEGRTNLI.

The segment at Cys-58–Cys-73 adopts a C4-type zinc-finger fold. Residues Asn-81–Pro-175 form the Toprim domain.

Belongs to the RecR family.

May play a role in DNA repair. It seems to be involved in an RecBC-independent recombinational process of DNA repair. It may act with RecF and RecO. The sequence is that of Recombination protein RecR from Prochlorococcus marinus (strain MIT 9515).